Here is a 390-residue protein sequence, read N- to C-terminus: Protein MalY (390 aa).

K233 is subject to N6-(pyridoxal phosphate)lysine.

Belongs to the class-II pyridoxal-phosphate-dependent aminotransferase family. MalY/PatB cystathionine beta-lyase subfamily. Homodimer. Interacts with MalT. Requires pyridoxal 5'-phosphate as cofactor.

The catalysed reaction is L,L-cystathionine + H2O = L-homocysteine + pyruvate + NH4(+). It carries out the reaction an S-substituted L-cysteine + H2O = a thiol + pyruvate + NH4(+). Functionally, acts as a beta-cystathionase and as a repressor of the maltose regulon. This is Protein MalY (malY) from Escherichia coli (strain K12).